The chain runs to 380 residues: Chaperone protein DnaJ (380 aa).

In terms of domain architecture, J spans 5 to 69 (DYYEILGVSK…QKRAHYDQFG (65 aa)). The CR-type zinc-finger motif lies at 135 to 217 (GKETDIEIPR…CGGTGRVKRR (83 aa)). Residues cysteine 148, cysteine 151, cysteine 165, cysteine 168, cysteine 191, cysteine 194, cysteine 205, and cysteine 208 each contribute to the Zn(2+) site. CXXCXGXG motif repeat units follow at residues 148–155 (CNTCHGTG), 165–172 (CSYCHGTG), 191–198 (CPYCGGTG), and 205–212 (CTTCGGTG).

The protein belongs to the DnaJ family. In terms of assembly, homodimer. It depends on Zn(2+) as a cofactor.

The protein resides in the cytoplasm. Participates actively in the response to hyperosmotic and heat shock by preventing the aggregation of stress-denatured proteins and by disaggregating proteins, also in an autonomous, DnaK-independent fashion. Unfolded proteins bind initially to DnaJ; upon interaction with the DnaJ-bound protein, DnaK hydrolyzes its bound ATP, resulting in the formation of a stable complex. GrpE releases ADP from DnaK; ATP binding to DnaK triggers the release of the substrate protein, thus completing the reaction cycle. Several rounds of ATP-dependent interactions between DnaJ, DnaK and GrpE are required for fully efficient folding. Also involved, together with DnaK and GrpE, in the DNA replication of plasmids through activation of initiation proteins. The protein is Chaperone protein DnaJ of Parageobacillus thermoglucosidasius (Geobacillus thermoglucosidasius).